A 229-amino-acid polypeptide reads, in one-letter code: HTH-type transcriptional regulator HbdR (229 aa).

In terms of domain architecture, HTH tetR-type spans 20–80 (EERRHQIISA…LTLKNVLDTY (61 aa)). The segment at residues 43–62 (TILQIAREAKVSTGLIYQYF) is a DNA-binding region (H-T-H motif).

As to quaternary structure, homodimer in solution.

Its activity is regulated as follows. Activity is regulated by the effector molecules 3-hydroxybenzoyl-CoA and benzoyl-CoA, which bind to HbdR, alleviating its repression on the three target promoters and inducing the expression of the hbd genes. In terms of biological role, transcriptional regulator that controls the expression of the hbd cluster, which contains three catabolic operons and is responsible for the anaerobic degradation of 3-hydroxybenzoate. HbdR suppresses the activity of the three catabolic promoters (PhbdN, PhbdE and PhbdH) by binding to a conserved palindromic operator box. In addition, it slightly increases activity of its own promoter (PhbdR). The HbdR-mediated repression of hbd genes may play a crucial biological role in maintaining requisite hydroxybenzoate levels in the cell. The polypeptide is HTH-type transcriptional regulator HbdR (Aromatoleum sp. (strain CIB) (Azoarcus sp. (strain CIB))).